The sequence spans 173 residues: Photosystem I assembly protein Ycf3 (173 aa).

3 TPR repeats span residues 35-68 (AYIYYRDGLAAQNNGDYSEALEYYKESLLLEENK), 72-105 (GETLKNMAIIFMSNGEEDLSIETYEKALVENPKQ), and 120-153 (GRNAEQNGDLDQRDIWFDKAAEVWTKAVKLYPGG).

It belongs to the Ycf3 family.

It is found in the cellular thylakoid membrane. Its function is as follows. Essential for the assembly of the photosystem I (PSI) complex. May act as a chaperone-like factor to guide the assembly of the PSI subunits. The polypeptide is Photosystem I assembly protein Ycf3 (Prochlorococcus marinus (strain MIT 9312)).